Consider the following 281-residue polypeptide: Bifunctional protein FolD (281 aa).

NADP(+)-binding positions include 165 to 167, T192, and V233; that span reads GRG.

This sequence belongs to the tetrahydrofolate dehydrogenase/cyclohydrolase family. Homodimer.

It catalyses the reaction (6R)-5,10-methylene-5,6,7,8-tetrahydrofolate + NADP(+) = (6R)-5,10-methenyltetrahydrofolate + NADPH. The enzyme catalyses (6R)-5,10-methenyltetrahydrofolate + H2O = (6R)-10-formyltetrahydrofolate + H(+). It participates in one-carbon metabolism; tetrahydrofolate interconversion. Functionally, catalyzes the oxidation of 5,10-methylenetetrahydrofolate to 5,10-methenyltetrahydrofolate and then the hydrolysis of 5,10-methenyltetrahydrofolate to 10-formyltetrahydrofolate. The chain is Bifunctional protein FolD from Mycolicibacterium paratuberculosis (strain ATCC BAA-968 / K-10) (Mycobacterium paratuberculosis).